The following is a 105-amino-acid chain: Met repressor (105 aa).

This sequence belongs to the MetJ family. As to quaternary structure, homodimer.

The protein localises to the cytoplasm. Functionally, this regulatory protein, when combined with SAM (S-adenosylmethionine) represses the expression of the methionine regulon and of enzymes involved in SAM synthesis. This Photorhabdus laumondii subsp. laumondii (strain DSM 15139 / CIP 105565 / TT01) (Photorhabdus luminescens subsp. laumondii) protein is Met repressor.